A 479-amino-acid polypeptide reads, in one-letter code: Poly(A) polymerase catalytic subunit (479 aa).

Catalysis depends on residues D202 and D204. Ca(2+) is bound by residues D202, D204, and D253.

The protein belongs to the poxviridae poly(A) polymerase catalytic subunit family. As to quaternary structure, heterodimer of a large (catalytic) subunit and a small (regulatory) subunit.

It carries out the reaction RNA(n) + ATP = RNA(n)-3'-adenine ribonucleotide + diphosphate. Its function is as follows. Polymerase that creates the 3'-poly(A) tail of mRNA's. This chain is Poly(A) polymerase catalytic subunit (OPG063), found in Cowpox virus (strain GRI-90 / Grishak) (CPV).